The following is a 1795-amino-acid chain: Putative surface cell antigen sca2 (1795 aa).

The signal sequence occupies residues 1–33; sequence MNLQNSHSKKYVLTFFMSTCLLTSSFLSTSARA. A compositionally biased stretch (polar residues) spans 360–373; that stretch reads FLNNNDTTKPSTGR. 3 disordered regions span residues 360-391, 664-709, and 1354-1441; these read FLNN…SNQS, LEQT…SSNS, and KQEN…DEEL. Residues 672 to 700 show a composition bias toward pro residues; sequence PNPPPLPLNGGIPNPPPLPLNGSMPPPPL. 2 stretches are compositionally biased toward basic and acidic residues: residues 1364 to 1383 and 1398 to 1409; these read SSTK…EQSD and SKNDKSSDDKKS. The segment covering 1417–1432 has biased composition (acidic residues); the sequence is DEDDTGYATDEEELEE. An Autotransporter domain is found at 1516 to 1795; that stretch reads ETSINRGVWI…QGLIKLKVNL (280 aa).

It is found in the cell outer membrane. The polypeptide is Putative surface cell antigen sca2 (sca2) (Rickettsia conorii (strain ATCC VR-613 / Malish 7)).